Consider the following 438-residue polypeptide: Tol-Pal system protein TolB (438 aa).

An N-terminal signal peptide occupies residues methionine 1 to alanine 21.

This sequence belongs to the TolB family. In terms of assembly, the Tol-Pal system is composed of five core proteins: the inner membrane proteins TolA, TolQ and TolR, the periplasmic protein TolB and the outer membrane protein Pal. They form a network linking the inner and outer membranes and the peptidoglycan layer.

It is found in the periplasm. In terms of biological role, part of the Tol-Pal system, which plays a role in outer membrane invagination during cell division and is important for maintaining outer membrane integrity. The sequence is that of Tol-Pal system protein TolB from Desulfosudis oleivorans (strain DSM 6200 / JCM 39069 / Hxd3) (Desulfococcus oleovorans).